The primary structure comprises 279 residues: Acyl-coenzyme A thioesterase MBLAC2 (279 aa).

At S2 the chain carries N-acetylserine. Residues H83, H85, D87, H88, H170, D189, and H231 each contribute to the Zn(2+) site. C254 is lipidated: S-palmitoyl cysteine.

The protein belongs to the metallo-beta-lactamase superfamily. Glyoxalase II family. Zn(2+) is required as a cofactor. Post-translationally, palmitoylated on Cys-254 by ZDHHC20.

The protein resides in the endoplasmic reticulum membrane. The protein localises to the cell membrane. The enzyme catalyses hexadecanoyl-CoA + H2O = hexadecanoate + CoA + H(+). The catalysed reaction is dodecanoyl-CoA + H2O = dodecanoate + CoA + H(+). It carries out the reaction tetradecanoyl-CoA + H2O = tetradecanoate + CoA + H(+). It catalyses the reaction octadecanoyl-CoA + H2O = octadecanoate + CoA + H(+). The enzyme catalyses a beta-lactam + H2O = a substituted beta-amino acid. Functionally, acyl-CoA thioesterases are a group of enzymes that catalyze the hydrolysis of acyl-CoAs to the free fatty acid and coenzyme A (CoASH), providing the potential to regulate intracellular levels of acyl-CoAs, free fatty acids and CoASH. Has an acyl-CoA thioesterase activity towards the long chain fatty acyl-CoA thioester palmitoyl-CoA (hexadecanoyl-CoA; C16:0-CoA). Displays a substrate preference for fatty acyl-CoAs with chain-lengths C12-C18. The polypeptide is Acyl-coenzyme A thioesterase MBLAC2 (MBLAC2) (Bos taurus (Bovine)).